Here is a 591-residue protein sequence, read N- to C-terminus: Protein CBFA2T3 (591 aa).

The interval 1-105 is disordered; sequence MPGGTPRLEG…SSSASLSTHQ (105 aa). A mediates localization to the nucleus region spans residues 1-381; it reads MPGGTPRLEG…ADREELNHWI (381 aa). The span at 41-52 shows a compositional bias: pro residues; that stretch reads STPPNMPPPPPA. Residues 55 to 105 are compositionally biased toward polar residues; it reads QGATRHPSFTPSTMMNGSSHSPTAINGAPSTPNGFSNGPATSSSASLSTHQ. The 96-residue stretch at 112-207 folds into the TAFH domain; it reads ARQLSKLKRF…SPAQYLAQHE (96 aa). Disordered regions lie at residues 226-291 and 386-420; these read LEVS…PPQH and DAED…DFAP. Residues 230 to 256 show a composition bias toward basic and acidic residues; it reads ESGKRRTPDRTKENGLDRDPLHPEHLS. The span at 263–274 shows a compositional bias: polar residues; that stretch reads SPAQRYSPSNGL. Pro residues predominate over residues 279 to 290; it reads NGLPHPPGPPPQ. Residues 394–410 are compositionally biased toward low complexity; sequence SPPSARPHNSSSSSEAP. Residues 433–488 adopt a coiled-coil conformation; it reads RKAEEAVNEVKRQAMSELQKAVSDAERKAHELITTERAKMERALAEAKRQASEDAL. The Zn(2+) site is built by Cys501, Cys504, Cys512, Cys515, Cys521, Cys525, His533, and Cys537. The MYND-type zinc-finger motif lies at 501–537; the sequence is CWNCGRKASETCSGCNTARYCGSFCQHKDWEKHHHVC. A disordered region spans residues 548–591; the sequence is SVPTAVGQPEAVPPMASSPSDAGSAGASRAGTPGTPAPLESASR. The span at 560-585 shows a compositional bias: low complexity; the sequence is PPMASSPSDAGSAGASRAGTPGTPAP.

It belongs to the CBFA2T family.

The protein resides in the nucleus. It localises to the nucleolus. The protein localises to the nucleoplasm. It is found in the golgi apparatus. Functionally, functions as a transcriptional repressor. Regulates the proliferation and the differentiation of erythroid progenitors. Plays a role in granulocyte differentiation. May also function as an A-kinase-anchoring protein. The protein is Protein CBFA2T3 (CBFA2T3) of Gallus gallus (Chicken).